The primary structure comprises 499 residues: Protein nucleotidyltransferase YdiU (499 aa).

Residues Gly-95, Gly-97, Arg-98, Lys-117, Asp-129, Gly-130, Arg-180, and Arg-187 each contribute to the ATP site. Asp-256 functions as the Proton acceptor in the catalytic mechanism. Mg(2+)-binding residues include Asn-257 and Asp-266. Residue Asp-266 coordinates ATP.

The protein belongs to the SELO family. Requires Mg(2+) as cofactor. Mn(2+) is required as a cofactor.

It carries out the reaction L-seryl-[protein] + ATP = 3-O-(5'-adenylyl)-L-seryl-[protein] + diphosphate. It catalyses the reaction L-threonyl-[protein] + ATP = 3-O-(5'-adenylyl)-L-threonyl-[protein] + diphosphate. The catalysed reaction is L-tyrosyl-[protein] + ATP = O-(5'-adenylyl)-L-tyrosyl-[protein] + diphosphate. The enzyme catalyses L-histidyl-[protein] + UTP = N(tele)-(5'-uridylyl)-L-histidyl-[protein] + diphosphate. It carries out the reaction L-seryl-[protein] + UTP = O-(5'-uridylyl)-L-seryl-[protein] + diphosphate. It catalyses the reaction L-tyrosyl-[protein] + UTP = O-(5'-uridylyl)-L-tyrosyl-[protein] + diphosphate. Nucleotidyltransferase involved in the post-translational modification of proteins. It can catalyze the addition of adenosine monophosphate (AMP) or uridine monophosphate (UMP) to a protein, resulting in modifications known as AMPylation and UMPylation. This Dechloromonas aromatica (strain RCB) protein is Protein nucleotidyltransferase YdiU.